Consider the following 748-residue polypeptide: tRNA endonuclease ANKZF1 (748 aa).

The segment at 96–120 (LFCSACDQIFQNHQEQREHYKLDWH) adopts a C2H2-type zinc-finger fold. Residues 135 to 185 (SASDFEQQSSTGDLSSISGSDDTDSSSEEDLLPLDEGRAESEKPNRPPGFY) form a disordered region. The segment covering 143 to 154 (SSTGDLSSISGS) has biased composition (low complexity). The span at 155 to 167 (DDTDSSSEEDLLP) shows a compositional bias: acidic residues. Basic and acidic residues predominate over residues 169–179 (DEGRAESEKPN). Positions 227-370 (GPRYYVVLMA…QRVLHKLTTL (144 aa)) constitute a VLRF1 domain. Residue Q270 is part of the active site. 2 positions are modified to phosphoserine: S282 and S385. A compositionally biased stretch (basic and acidic residues) spans 383–408 (FHSPETHWKPVREERKKDTEKEKTKV). Disordered stretches follow at residues 383-438 (FHSP…SEVE) and 460-497 (RRRR…TQEV). Residues 429 to 438 (SQEEDGSEVE) show a composition bias toward acidic residues. The segment covering 484–497 (QPQDEPFSQPTQEV) has biased composition (polar residues). The stretch at 515-545 (ELWDTLLAACRAGEVEVLKLQLATGLVDPGV) is one ANK 1 repeat. S555 carries the post-translational modification Phosphoserine. The stretch at 556–585 (GGFTLLHAAAAAGRGLVVRLLLEAGADPTV) is one ANK 2 repeat. Residues 621–677 (KARVPGPLTQEMEARQATRKKEQKAARRQREQQQRKQREQEEQEQEEQRRFAALSDR) are disordered. Residues 628–681 (LTQEMEARQATRKKEQKAARRQREQQQRKQREQEEQEQEEQRRFAALSDREKRA) are a coiled coil. T629 carries the post-translational modification Phosphothreonine. The segment covering 632–677 (MEARQATRKKEQKAARRQREQQQRKQREQEEQEQEEQRRFAALSDR) has biased composition (basic and acidic residues). The interval 654 to 666 (QRKQREQEEQEQE) is VCP/p97-interacting motif (VIM). Residue S702 is modified to Phosphoserine.

It belongs to the ANKZF1/VMS1 family. Interacts (via VIM motif) with VCP.

Its subcellular location is the cytoplasm. Endonuclease that cleaves polypeptidyl-tRNAs downstream of the ribosome-associated quality control (RQC) pathway to release incompletely synthesized polypeptides for degradation. The RQC pathway disassembles aberrantly stalled translation complexes to recycle or degrade the constituent parts. ANKZF1 acts downstream disassembly of stalled ribosomes and specifically cleaves off the terminal 3'-CCA nucleotides universal to all tRNAs from polypeptidyl-tRNAs, releasing (1) ubiquitinated polypeptides from 60S ribosomal subunit for degradation and (2) cleaved tRNAs. ANKZF1-cleaved tRNAs are then repaired and recycled by ELAC1 and TRNT1. Also plays a role in the cellular response to hydrogen peroxide and in the maintenance of mitochondrial integrity under conditions of cellular stress. The protein is tRNA endonuclease ANKZF1 of Mus musculus (Mouse).